The sequence spans 310 residues: N-acetyl-gamma-glutamyl-phosphate reductase (310 aa).

The active site involves Cys117.

It belongs to the NAGSA dehydrogenase family. Type 2 subfamily.

It is found in the cytoplasm. The enzyme catalyses N-acetyl-L-glutamate 5-semialdehyde + phosphate + NADP(+) = N-acetyl-L-glutamyl 5-phosphate + NADPH + H(+). Its pathway is amino-acid biosynthesis; L-arginine biosynthesis; N(2)-acetyl-L-ornithine from L-glutamate: step 3/4. Catalyzes the NADPH-dependent reduction of N-acetyl-5-glutamyl phosphate to yield N-acetyl-L-glutamate 5-semialdehyde. This is N-acetyl-gamma-glutamyl-phosphate reductase from Brucella melitensis biotype 1 (strain ATCC 23456 / CCUG 17765 / NCTC 10094 / 16M).